The following is a 226-amino-acid chain: Amelogenin (226 aa).

An N-terminal signal peptide occupies residues 1 to 16 (MGTWILFACLLGTAFA). S32 carries the post-translational modification Phosphoserine. Residues 86-196 (QQHPPSHTTL…LPPQQALPPM (111 aa)) are disordered. Composition is skewed to low complexity over residues 88-120 (HPPS…MPVP) and 137-182 (PTSQ…SPLH). Residues 183-192 (PIQPLPPQQA) show a composition bias toward pro residues.

The protein belongs to the amelogenin family.

Its subcellular location is the secreted. The protein localises to the extracellular space. It localises to the extracellular matrix. Plays a role in the biomineralization of teeth. Seems to regulate the formation of crystallites during the secretory stage of tooth enamel development. Thought to play a major role in the structural organization and mineralization of developing enamel. The sequence is that of Amelogenin (AMEL) from Cavia porcellus (Guinea pig).